Consider the following 344-residue polypeptide: Transcription factor HHO3 (344 aa).

Disordered stretches follow at residues 90-122 (KWSS…DKKK) and 156-212 (AFQP…KQRR). Residues 97-106 (DETDKDEEAE) are compositionally biased toward acidic residues. Positions 178-188 (TPTSTTTTSST) are enriched in low complexity. In terms of domain architecture, HTH myb-type spans 206–266 (SNRKQRRCWS…HLQKYRLHTR (61 aa)). The H-T-H motif DNA-binding region spans 237–262 (PKQIRDLMKVDGLTNDEVKSHLQKYR). The segment at 306–344 (PVATQPPQSSTSGERSNRGCKSPATSSTTTHTPHLLPLS) is disordered. Positions 310–319 (QPPQSSTSGE) are enriched in polar residues. Over residues 330–344 (TSSTTTHTPHLLPLS) the composition is skewed to low complexity.

It localises to the nucleus. In terms of biological role, probable transcription factor involved in phosphate signaling in roots. The protein is Transcription factor HHO3 of Arabidopsis thaliana (Mouse-ear cress).